A 267-amino-acid chain; its full sequence is tRNA-cytidine(32) 2-sulfurtransferase (267 aa).

Positions 37 to 42 (SGGKDS) match the PP-loop motif motif. Residues C112, C115, and C203 each coordinate [4Fe-4S] cluster.

This sequence belongs to the TtcA family. Homodimer. Mg(2+) serves as cofactor. Requires [4Fe-4S] cluster as cofactor.

It is found in the cytoplasm. The catalysed reaction is cytidine(32) in tRNA + S-sulfanyl-L-cysteinyl-[cysteine desulfurase] + AH2 + ATP = 2-thiocytidine(32) in tRNA + L-cysteinyl-[cysteine desulfurase] + A + AMP + diphosphate + H(+). It functions in the pathway tRNA modification. In terms of biological role, catalyzes the ATP-dependent 2-thiolation of cytidine in position 32 of tRNA, to form 2-thiocytidine (s(2)C32). The sulfur atoms are provided by the cysteine/cysteine desulfurase (IscS) system. In Dichelobacter nodosus (strain VCS1703A), this protein is tRNA-cytidine(32) 2-sulfurtransferase.